A 166-amino-acid polypeptide reads, in one-letter code: Regulatory protein RecX (166 aa).

It belongs to the RecX family.

It is found in the cytoplasm. Functionally, modulates RecA activity. The sequence is that of Regulatory protein RecX from Klebsiella pneumoniae (strain 342).